The following is a 472-amino-acid chain: Probable glycine dehydrogenase (decarboxylating) subunit 2 (472 aa).

At lysine 268 the chain carries N6-(pyridoxal phosphate)lysine.

This sequence belongs to the GcvP family. C-terminal subunit subfamily. The glycine cleavage system is composed of four proteins: P, T, L and H. In this organism, the P 'protein' is a heterodimer of two subunits. The cofactor is pyridoxal 5'-phosphate.

The enzyme catalyses N(6)-[(R)-lipoyl]-L-lysyl-[glycine-cleavage complex H protein] + glycine + H(+) = N(6)-[(R)-S(8)-aminomethyldihydrolipoyl]-L-lysyl-[glycine-cleavage complex H protein] + CO2. In terms of biological role, the glycine cleavage system catalyzes the degradation of glycine. The P protein binds the alpha-amino group of glycine through its pyridoxal phosphate cofactor; CO(2) is released and the remaining methylamine moiety is then transferred to the lipoamide cofactor of the H protein. The chain is Probable glycine dehydrogenase (decarboxylating) subunit 2 from Thermoplasma acidophilum (strain ATCC 25905 / DSM 1728 / JCM 9062 / NBRC 15155 / AMRC-C165).